A 388-amino-acid polypeptide reads, in one-letter code: GTPase Obg (388 aa).

Residues 1–159 (MKFVDEAVIR…RSLKLELLLL (159 aa)) enclose the Obg domain. The region spanning 160–333 (ADVGLLGMPN…LAAKLWDFIQ (174 aa)) is the OBG-type G domain. GTP-binding positions include 166-173 (GMPNAGKS), 191-195 (FTTLV), 213-216 (DIPG), 283-286 (NKAD), and 314-316 (SAY). 2 residues coordinate Mg(2+): serine 173 and threonine 193.

It belongs to the TRAFAC class OBG-HflX-like GTPase superfamily. OBG GTPase family. Monomer. Mg(2+) serves as cofactor.

The protein localises to the cytoplasm. In terms of biological role, an essential GTPase which binds GTP, GDP and possibly (p)ppGpp with moderate affinity, with high nucleotide exchange rates and a fairly low GTP hydrolysis rate. Plays a role in control of the cell cycle, stress response, ribosome biogenesis and in those bacteria that undergo differentiation, in morphogenesis control. The polypeptide is GTPase Obg (Shewanella oneidensis (strain ATCC 700550 / JCM 31522 / CIP 106686 / LMG 19005 / NCIMB 14063 / MR-1)).